The primary structure comprises 746 residues: PAN2-PAN3 deadenylation complex subunit pan3 (746 aa).

The segment at 7 to 35 adopts a C3H1-type zinc-finger fold; that stretch reads PKNQKQCKNIALHGYCRNSDKCEFSHELT. Residues 64–97 are compositionally biased toward low complexity; that stretch reads QQQQQQQNSNGNGSNNTATSNNPIISPNSNIASP. Disordered regions lie at residues 64-100, 169-205, and 219-275; these read QQQQQQQNSNGNGSNNTATSNNPIISPNSNIASPLKK, DDQHLYPYGDNSVDDYEQHQYEPQPQPNNGIDPNMNN, and NASP…PSLQ. Over residues 196–205 the composition is skewed to polar residues; sequence NNGIDPNMNN. The segment covering 221–275 has biased composition (low complexity); the sequence is SPQSYQQQFQQPNPSPQSSSQQQQQQQQQQQQAVYQQQQQQQPSSQPLAQNPSLQ. The segment at 351–610 is pseudokinase domain; the sequence is DPNDPRIKNI…NIDEVVLMIS (260 aa). Residues arginine 407, 457-464, and 509-510 contribute to the ATP site; these read EFFPGSET and SK. The stretch at 611-649 forms a coiled coil; sequence GRLLQENNYLHTYTDDLETELSKEYENGRLFRLVTKLGF. The knob domain stretch occupies residues 650–746; sequence INERPLYDMD…SELVSQKSHI (97 aa).

This sequence belongs to the protein kinase superfamily. PAN3 family. Homodimer. Forms a heterotrimer with a catalytic subunit PAN2 to form the poly(A)-nuclease (PAN) deadenylation complex. Interacts (via PAM-2 motif) with poly(A)-binding protein (via PABC domain), conferring substrate specificity of the enzyme complex.

Its subcellular location is the cytoplasm. Regulatory subunit of the poly(A)-nuclease (PAN) deadenylation complex, one of two cytoplasmic mRNA deadenylases involved in mRNA turnover. PAN specifically shortens poly(A) tails of RNA and the activity is stimulated by poly(A)-binding protein (PABP). PAN deadenylation is followed by rapid degradation of the shortened mRNA tails by the CCR4-NOT complex. Deadenylated mRNAs are then degraded by two alternative mechanisms, namely exosome-mediated 3'-5' exonucleolytic degradation, or deadenylation-dependent mRNA decaping and subsequent 5'-3' exonucleolytic degradation by XRN1. PAN3 acts as a positive regulator for PAN activity, recruiting the catalytic subunit PAN2 to mRNA via its interaction with RNA and PABP. This chain is PAN2-PAN3 deadenylation complex subunit pan3, found in Dictyostelium discoideum (Social amoeba).